The primary structure comprises 427 residues: 3-phosphoshikimate 1-carboxyvinyltransferase (427 aa).

K22, S23, and R27 together coordinate 3-phosphoshikimate. K22 provides a ligand contact to phosphoenolpyruvate. Phosphoenolpyruvate contacts are provided by G96 and R124. 3-phosphoshikimate is bound by residues S169, S170, Q171, S197, D313, N336, and K340. Residue Q171 participates in phosphoenolpyruvate binding. D313 serves as the catalytic Proton acceptor. Residues R344, R386, and K411 each coordinate phosphoenolpyruvate.

It belongs to the EPSP synthase family. Monomer.

Its subcellular location is the cytoplasm. The catalysed reaction is 3-phosphoshikimate + phosphoenolpyruvate = 5-O-(1-carboxyvinyl)-3-phosphoshikimate + phosphate. It functions in the pathway metabolic intermediate biosynthesis; chorismate biosynthesis; chorismate from D-erythrose 4-phosphate and phosphoenolpyruvate: step 6/7. Catalyzes the transfer of the enolpyruvyl moiety of phosphoenolpyruvate (PEP) to the 5-hydroxyl of shikimate-3-phosphate (S3P) to produce enolpyruvyl shikimate-3-phosphate and inorganic phosphate. The polypeptide is 3-phosphoshikimate 1-carboxyvinyltransferase (Shigella flexneri serotype 5b (strain 8401)).